Reading from the N-terminus, the 412-residue chain is Heat stress transcription factor A-3 (412 aa).

The DNA-binding element occupies 53 to 147; that stretch reads IPPFLSKTFD…LLKNIHRRRS (95 aa). The segment at 144 to 170 is disordered; it reads RRRSPQSNQTCCSSTSQSQGSPTEVGG. The span at 148 to 166 shows a compositional bias: low complexity; it reads PQSNQTCCSSTSQSQGSPT. The tract at residues 159 to 225 is hydrophobic repeat HR-A/B; sequence SQSQGSPTEV…QLLSFLAKLF (67 aa). Residues 166–224 are a coiled coil; it reads TEVGGEIEKLRKERRALMEEMVELQQQSRGTARHVDTVNQRLKAAEQRQKQLLSFLAKL. Residues 238–254 carry the Bipartite nuclear localization signal motif; the sequence is KGKEKGGALGLEKARKK. The AHA1 motif lies at 277–286; it reads DDWERLLMYD. An AHA2 motif is present at residues 381–390; it reads DVCWEQFAAG.

It belongs to the HSF family. Class A subfamily. As to quaternary structure, homotrimer. In terms of processing, exhibits temperature-dependent phosphorylation.

Its subcellular location is the nucleus. Functionally, transcriptional activator that specifically binds DNA sequence 5'-AGAAnnTTCT-3' known as heat shock promoter elements (HSE). Involved in heat stress response. Activated by DREB2A under heat stress. The chain is Heat stress transcription factor A-3 (HSFA3) from Arabidopsis thaliana (Mouse-ear cress).